A 748-amino-acid chain; its full sequence is Formate acetyltransferase (748 aa).

The PFL domain maps to 5–618; sequence NNHTNAWQGF…KTGNTPDGRK (614 aa). Cys412 serves as the catalytic S-acetylcysteine intermediate. Cys413 acts as the Cysteine radical intermediate in catalysis. One can recognise a Glycine radical domain in the interval 625 to 748; it reads PGANPMHGRD…VISRTFHESM (124 aa). Gly723 is subject to Glycine radical.

Belongs to the glycyl radical enzyme (GRE) family. PFL subfamily. As to quaternary structure, homodimer.

The protein resides in the cytoplasm. The catalysed reaction is formate + acetyl-CoA = pyruvate + CoA. The protein operates within fermentation; pyruvate fermentation; formate from pyruvate: step 1/1. In terms of biological role, catalyzes the conversion of pyruvate to formate and acetyl-CoA. This Staphylococcus epidermidis (strain ATCC 35984 / DSM 28319 / BCRC 17069 / CCUG 31568 / BM 3577 / RP62A) protein is Formate acetyltransferase (pflB).